The chain runs to 356 residues: Magnesium-protoporphyrin IX monomethyl ester [oxidative] cyclase (356 aa).

Belongs to the AcsF family. Fe cation serves as cofactor.

It catalyses the reaction Mg-protoporphyrin IX 13-monomethyl ester + 3 NADPH + 3 O2 + 2 H(+) = 3,8-divinyl protochlorophyllide a + 3 NADP(+) + 5 H2O. It participates in porphyrin-containing compound metabolism; chlorophyll biosynthesis (light-independent). Catalyzes the formation of the isocyclic ring in chlorophyll biosynthesis. Mediates the cyclase reaction, which results in the formation of divinylprotochlorophyllide (Pchlide) characteristic of all chlorophylls from magnesium-protoporphyrin IX 13-monomethyl ester (MgPMME). The chain is Magnesium-protoporphyrin IX monomethyl ester [oxidative] cyclase from Parasynechococcus marenigrum (strain WH8102).